We begin with the raw amino-acid sequence, 598 residues long: Protein VASCULAR ASSOCIATED DEATH 1, chloroplastic (598 aa).

Over residues 1–11 (MAMLSTASVSG) the composition is skewed to polar residues. The disordered stretch occupies residues 1 to 64 (MAMLSTASVS…PSRGGDNQSE (64 aa)). The N-terminal 68 residues, 1–68 (MAMLSTASVS…GDNQSEVISK (68 aa)), are a transit peptide targeting the chloroplast. A glycan (N-linked (GlcNAc...) asparagine) is linked at N61. The region spanning 70-134 (EEYRQLFRLP…PFAEISCVKR (65 aa)) is the GRAM domain. In terms of domain architecture, VASt spans 272–444 (DFTKVAEAKF…MAHELLKQKK (173 aa)). 2 N-linked (GlcNAc...) asparagine glycosylation sites follow: N329 and N494. Residues 507–527 (QVIVLAFAVILLMQVTIVVLL) traverse the membrane as a helical segment. Positions 553–595 (WLEKRMHFLREEMMMVEDRLQRMRQDHAALKAQFHHLERLLRR) form a coiled coil.

The protein resides in the membrane. It is found in the plastid. It localises to the chloroplast. In terms of biological role, involved in ethylene- and salicylic acid-dependent cell death control associated with cells in the vicinity of vascular bundles. The polypeptide is Protein VASCULAR ASSOCIATED DEATH 1, chloroplastic (Arabidopsis thaliana (Mouse-ear cress)).